The chain runs to 335 residues: Eukaryotic translation initiation factor 3 subunit I (335 aa).

5 WD repeats span residues 8–47 (GHERALTQIRYNKDGDIIFSTAKDQHICAWYAHNGERLGT), 50–91 (GHQG…KTWD), 145–184 (CAESKATVAGWSYMSKYIIAGHEDGSVSQYDSKTGELLFN), 189–228 (EPDLQVTDLQWSPDRTYFITASKDKTAKLVNARDLEVMKT), and 286–325 (GHFGPLNTVAVDPNGKGYASGGEDGYVRVHQFDKGYFDFT).

This sequence belongs to the eIF-3 subunit I family. In terms of assembly, component of the eukaryotic translation initiation factor 3 (eIF-3) complex.

Its subcellular location is the cytoplasm. In terms of biological role, component of the eukaryotic translation initiation factor 3 (eIF-3) complex, which is involved in protein synthesis of a specialized repertoire of mRNAs and, together with other initiation factors, stimulates binding of mRNA and methionyl-tRNAi to the 40S ribosome. The eIF-3 complex specifically targets and initiates translation of a subset of mRNAs involved in cell proliferation. The protein is Eukaryotic translation initiation factor 3 subunit I (tif34) of Sclerotinia sclerotiorum (strain ATCC 18683 / 1980 / Ss-1) (White mold).